Consider the following 575-residue polypeptide: Proline--tRNA ligase (575 aa).

It belongs to the class-II aminoacyl-tRNA synthetase family. ProS type 1 subfamily. Homodimer.

It localises to the cytoplasm. The enzyme catalyses tRNA(Pro) + L-proline + ATP = L-prolyl-tRNA(Pro) + AMP + diphosphate. Functionally, catalyzes the attachment of proline to tRNA(Pro) in a two-step reaction: proline is first activated by ATP to form Pro-AMP and then transferred to the acceptor end of tRNA(Pro). As ProRS can inadvertently accommodate and process non-cognate amino acids such as alanine and cysteine, to avoid such errors it has two additional distinct editing activities against alanine. One activity is designated as 'pretransfer' editing and involves the tRNA(Pro)-independent hydrolysis of activated Ala-AMP. The other activity is designated 'posttransfer' editing and involves deacylation of mischarged Ala-tRNA(Pro). The misacylated Cys-tRNA(Pro) is not edited by ProRS. This chain is Proline--tRNA ligase, found in Anaeromyxobacter sp. (strain Fw109-5).